Reading from the N-terminus, the 269-residue chain is MSKVIKKRVETSPRPTASSDSLQTCAGVIEYAKSISKSNAKCIEYVTLNASQYANCSSISIKLTDSLSSQMTSTFIMLEGETKLYKNKSKQDRSDGYFLKIKVTAASPMLYQLLEAVYGNIKHKERIPNSLHSLLVETITEKTFKDESIFINKLNGAMVEYVSTGELSILRSIEGELESLSKRERQLAKAIITPVVFYRSGTETKITFALKKLIIDREVVANVIGLSGDSERVSMTENVEEDLARNLGLVDIDDEYDEDSDKEKPIFNV.

Belongs to the orthopoxvirus OPG079 family. Homoomultimer (Potential). Interacts with the small subunit of ribonucleotide reductase. Interacts with host FAM111A; this interaction protomtes OPG079 degradation through autophagy.

The protein localises to the host cytoplasm. Its function is as follows. Plays an essential role in viral DNA replication. Binds to ssDNA with high affinity and localizes to cytoplasmic factories where nascent viral genomes accumulate. May disrupt loops, hairpins and other secondary structures present on ssDNA to reduce and eliminate pausing of viral DNA polymerase at specific sites during elongation. The sequence is that of Protein OPG079 (OPG079) from Variola virus (isolate Human/India/Ind3/1967) (VARV).